Consider the following 74-residue polypeptide: Kappa-scoloptoxin(07)-Ssm2f (74 aa).

A signal peptide spans 1–19; the sequence is MLVFYAILFVTVFSNTVMG. A propeptide spanning residues 20 to 41 is cleaved from the precursor; the sequence is ATIDKPIPKPIFREAIEEMEVN.

This sequence belongs to the scoloptoxin-07 family. Contains 3 disulfide bonds. Expressed by the venom gland.

It is found in the secreted. Its function is as follows. Inhibits voltage-gated potassium channels. The sequence is that of Kappa-scoloptoxin(07)-Ssm2f from Scolopendra mutilans (Chinese red-headed centipede).